The sequence spans 315 residues: Leukocidin-S subunit (315 aa).

A signal peptide spans 1–29 (MLKNKILATTLSVSLLAPLANPLLENAKA).

It belongs to the aerolysin family. Leukocidin consists of two protein components: F and S.

Functionally, leukocidin causes cytotoxic changes in polymorphonuclear leukocytes. The protein is Leukocidin-S subunit (lukS) of Staphylococcus aureus.